The chain runs to 459 residues: Argininosuccinate lyase (459 aa).

Belongs to the lyase 1 family. Argininosuccinate lyase subfamily.

It localises to the cytoplasm. The enzyme catalyses 2-(N(omega)-L-arginino)succinate = fumarate + L-arginine. It participates in amino-acid biosynthesis; L-arginine biosynthesis; L-arginine from L-ornithine and carbamoyl phosphate: step 3/3. The sequence is that of Argininosuccinate lyase from Prochlorococcus marinus (strain MIT 9515).